The chain runs to 47 residues: PhoP/PhoQ regulator MgrB (47 aa).

The helical transmembrane segment at 6–26 (WVILIIVLIACVILWTQTINV) threads the bilayer.

The protein belongs to the MgrB family. In terms of assembly, may form homooligomers. Probably interacts with the periplasmic domain of PhoQ.

The protein localises to the cell inner membrane. In terms of biological role, phoP-regulated transcription is redox-sensitive, being activated when the periplasm becomes more reducing. MgrB acts between DsbA/DsbB and PhoP/PhoQ in this pathway. Represses PhoP/PhoQ signaling, possibly by binding to the periplasmic domain of PhoQ, altering its activity and that of downstream effector PhoP. This Enterobacter sp. (strain 638) protein is PhoP/PhoQ regulator MgrB.